We begin with the raw amino-acid sequence, 109 residues long: Large ribosomal subunit protein uL22 (109 aa).

It belongs to the universal ribosomal protein uL22 family. In terms of assembly, part of the 50S ribosomal subunit.

Its function is as follows. This protein binds specifically to 23S rRNA; its binding is stimulated by other ribosomal proteins, e.g. L4, L17, and L20. It is important during the early stages of 50S assembly. It makes multiple contacts with different domains of the 23S rRNA in the assembled 50S subunit and ribosome. The globular domain of the protein is located near the polypeptide exit tunnel on the outside of the subunit, while an extended beta-hairpin is found that lines the wall of the exit tunnel in the center of the 70S ribosome. The protein is Large ribosomal subunit protein uL22 of Polaromonas sp. (strain JS666 / ATCC BAA-500).